Consider the following 151-residue polypeptide: Meiotically up-regulated gene 114 protein (151 aa).

Its subcellular location is the cytoplasm. In terms of biological role, has a role in meiosis. In Schizosaccharomyces pombe (strain 972 / ATCC 24843) (Fission yeast), this protein is Meiotically up-regulated gene 114 protein (mug114).